We begin with the raw amino-acid sequence, 486 residues long: Arginine/agmatine antiporter (486 aa).

Transmembrane regions (helical) follow at residues 12 to 32 (LGAIALAGMVISSMIGGGIFS), 41 to 61 (AGVGAIILAWILTGVGMFFIA), 85 to 105 (GFGPYIGFTIGWGYWLCQIFG), 132 to 152 (PAILGGSILIWVFNFIVLKGI), 160 to 180 (IIGTVGKLVPLIVFIIITAFL), 211 to 231 (STMLVTLWAFIGIEGAVVMSA), 242 to 262 (ATILGFTGCLTVYILLSILPF), 296 to 316 (VGLLIAVLSSWLSWTMIVAEI), 341 to 361 (VSLYVTSALMQIAMLLVYFST), 367 to 387 (MLSITGVMVLPAYFASAAFLV), 418 to 438 (IWLIYAGGLKYLLMAIILLAL), and 461 to 481 (EVTEITIIAFLALLAIFLFST).

This sequence belongs to the amino acid-polyamine-organocation (APC) superfamily. Basic amino acid/polyamine antiporter (APA) (TC 2.A.3.2) family.

The protein localises to the cell inner membrane. Functionally, catalyzes the exchange of L-arginine for agmatine. The arginine uptake by the bacterium in the macrophage may be a virulence factor against the host innate immune response. The protein is Arginine/agmatine antiporter (aaxC) of Chlamydia abortus (strain DSM 27085 / S26/3) (Chlamydophila abortus).